The following is a 464-amino-acid chain: Non-neuronal cytoplasmic intermediate filament protein (464 aa).

Residues 1-14 (MSTQTKKVTRTIIT) are compositionally biased toward polar residues. A disordered region spans residues 1–59 (MSTQTKKVTRTIITSSSGGGGGGGGGRASYSSSGRFSGGGGRMRAGGVTSRRSVGSSYS). The head stretch occupies residues 1-101 (MSTQTKKVTR…RMTRAHEKQE (101 aa)). The span at 17–27 (SGGGGGGGGGR) shows a compositional bias: gly residues. Positions 45–59 (AGGVTSRRSVGSSYS) are enriched in low complexity. One can recognise an IF rod domain in the interval 98–413 (EKQELSHLND…KLLEGEEIRL (316 aa)). Residues 102 to 133 (LSHLNDRFASYIDKVRYLQERNSKLEAQIKIQ) are coil 1A. Positions 134–144 (ESREAPNIKDL) are linker 1. The segment at 145–237 (YEKELRDLRA…FLKRVHDEEI (93 aa)) is coil 1B. The linker 2 stretch occupies residues 238–264 (RQLQDQLNESLTIVEVDSRAASTFAPG). The tract at residues 265 to 413 (PDLTEALREI…KLLEGEEIRL (149 aa)) is coil 2. A tail region spans residues 414-464 (FGESKEGVQQTSSSSSSSYQYSMKSGSGGGGGGSSSGKQQVTVSVSSGEEK). The disordered stretch occupies residues 415-464 (GESKEGVQQTSSSSSSSYQYSMKSGSGGGGGGSSSGKQQVTVSVSSGEEK). Low complexity predominate over residues 420–438 (GVQQTSSSSSSSYQYSMKS). Gly residues predominate over residues 439–448 (GSGGGGGGSS). Residues 449–464 (SGKQQVTVSVSSGEEK) show a composition bias toward low complexity.

This sequence belongs to the intermediate filament family. As to quaternary structure, can form homopolymers.

It localises to the cytoplasm. The polypeptide is Non-neuronal cytoplasmic intermediate filament protein (Branchiostoma lanceolatum (Common lancelet)).